The chain runs to 336 residues: HTH-type transcriptional regulator RafR (336 aa).

An HTH lacI-type domain is found at 2–55 (SLKAIATTLGISVTTVSRALGGFSDVAASTRERVEAEARRRGYRPNTQARRLKT). Residues 3-22 (LKAIATTLGISVTTVSRALG) constitute a DNA-binding region (H-T-H motif).

As to quaternary structure, homodimer.

Repressor that negatively controls the expression of the raffinose (raf) operon by binding to the raf operator (rafO) DNA. Acts by binding to two operator sites, O1 and 02, which flank the -35 raf promoter box. RafR bound to 02 alone results in 45 % repression of transcription, whereas RafR bound to O1 leads to only 6% repression. The polypeptide is HTH-type transcriptional regulator RafR (Escherichia coli).